A 258-amino-acid chain; its full sequence is Acyl-[acyl-carrier-protein]--UDP-N-acetylglucosamine O-acyltransferase (258 aa).

The protein belongs to the transferase hexapeptide repeat family. LpxA subfamily. As to quaternary structure, homotrimer.

It is found in the cytoplasm. It carries out the reaction a (3R)-hydroxyacyl-[ACP] + UDP-N-acetyl-alpha-D-glucosamine = a UDP-3-O-[(3R)-3-hydroxyacyl]-N-acetyl-alpha-D-glucosamine + holo-[ACP]. The protein operates within glycolipid biosynthesis; lipid IV(A) biosynthesis; lipid IV(A) from (3R)-3-hydroxytetradecanoyl-[acyl-carrier-protein] and UDP-N-acetyl-alpha-D-glucosamine: step 1/6. Functionally, involved in the biosynthesis of lipid A, a phosphorylated glycolipid that anchors the lipopolysaccharide to the outer membrane of the cell. The protein is Acyl-[acyl-carrier-protein]--UDP-N-acetylglucosamine O-acyltransferase of Syntrophobacter fumaroxidans (strain DSM 10017 / MPOB).